Reading from the N-terminus, the 410-residue chain is Phospho-N-acetylmuramoyl-pentapeptide-transferase (410 aa).

Helical transmembrane passes span 23–43, 73–93, 96–116, 132–152, 215–235, 248–268, 285–305, 307–327, 332–352, and 387–407; these read YITF…TIYG, TPTM…FLFA, HNIY…IGFV, GIFK…VLYF, WAWL…SNGA, TSAV…NIIF, VFIS…SFPA, VFMG…LAIA, ILIV…IIQV, and KIVT…IVTL.

It belongs to the glycosyltransferase 4 family. MraY subfamily. It depends on Mg(2+) as a cofactor.

It is found in the cell inner membrane. It catalyses the reaction UDP-N-acetyl-alpha-D-muramoyl-L-alanyl-gamma-D-glutamyl-meso-2,6-diaminopimeloyl-D-alanyl-D-alanine + di-trans,octa-cis-undecaprenyl phosphate = di-trans,octa-cis-undecaprenyl diphospho-N-acetyl-alpha-D-muramoyl-L-alanyl-D-glutamyl-meso-2,6-diaminopimeloyl-D-alanyl-D-alanine + UMP. Its pathway is cell wall biogenesis; peptidoglycan biosynthesis. Functionally, catalyzes the initial step of the lipid cycle reactions in the biosynthesis of the cell wall peptidoglycan: transfers peptidoglycan precursor phospho-MurNAc-pentapeptide from UDP-MurNAc-pentapeptide onto the lipid carrier undecaprenyl phosphate, yielding undecaprenyl-pyrophosphoryl-MurNAc-pentapeptide, known as lipid I. This chain is Phospho-N-acetylmuramoyl-pentapeptide-transferase, found in Flavobacterium johnsoniae (strain ATCC 17061 / DSM 2064 / JCM 8514 / BCRC 14874 / CCUG 350202 / NBRC 14942 / NCIMB 11054 / UW101) (Cytophaga johnsonae).